We begin with the raw amino-acid sequence, 1591 residues long: Dicer-like protein 1 (1591 aa).

Composition is skewed to basic and acidic residues over residues 1–20 (MEVHDGLKSPDKAAKSRYDD) and 41–52 (SKPRKISERKRA). Residues 1–52 (MEVHDGLKSPDKAAKSRYDDDRIDQDSEDEAVRLVANPDPSKPRKISERKRA) are disordered. Residues 115-298 (LFERAKQKNT…SYERATHELE (184 aa)) enclose the Helicase ATP-binding domain. ATP is bound at residue 128–135 (LDTGTGKT). A DEAH box motif is present at residues 242 to 245 (DEAH). Residues 439–607 (KLIEILAECF…CLSLPKDRIM (169 aa)) form the Helicase C-terminal domain. Positions 639-729 (SLVVLAEFVA…KSTLAKVLPA (91 aa)) constitute a Dicer dsRNA-binding fold domain. The 125-residue stretch at 888-1012 (TTTDRVPYNF…LVLETLLISQ (125 aa)) folds into the PAZ domain. 2 consecutive RNase III domains span residues 1050–1190 (IDIA…LTAQ) and 1243–1406 (CSQI…VDTG). The Mg(2+) site is built by Glu1283, Asp1392, and Glu1395. Residues 1440–1514 (THITSIITTQ…AKQAVAIYED (75 aa)) form the DRBM domain. Positions 1452, 1485, 1526, and 1528 each coordinate Zn(2+).

The protein belongs to the helicase family. Dicer subfamily. Mg(2+) serves as cofactor. Requires Mn(2+) as cofactor.

Dicer-like endonuclease which seems not to be involved in cleaving double-stranded RNA in the RNA interference (RNAi) pathway, contrary to its DCL2 counterpart. In Pyricularia oryzae (strain 70-15 / ATCC MYA-4617 / FGSC 8958) (Rice blast fungus), this protein is Dicer-like protein 1 (DCL1).